Here is a 112-residue protein sequence, read N- to C-terminus: Large ribosomal subunit protein P2 (112 aa).

Residues 69 to 85 (AGGAAMPAAAAGGAPAA) show a composition bias toward low complexity. The segment at 69-112 (AGGAAMPAAAAGGAPAAAEDKAEAKKPEAEPEEEEDDMGFSLFD) is disordered. The segment covering 86-97 (AEDKAEAKKPEA) has biased composition (basic and acidic residues).

It belongs to the eukaryotic ribosomal protein P1/P2 family. As to quaternary structure, P1 and P2 exist as dimers at the large ribosomal subunit. In terms of processing, phosphorylated.

In terms of biological role, plays an important role in the elongation step of protein synthesis. In Babesia bovis, this protein is Large ribosomal subunit protein P2.